Reading from the N-terminus, the 185-residue chain is Elongation factor P (185 aa).

This sequence belongs to the elongation factor P family.

It is found in the cytoplasm. It functions in the pathway protein biosynthesis; polypeptide chain elongation. In terms of biological role, involved in peptide bond synthesis. Stimulates efficient translation and peptide-bond synthesis on native or reconstituted 70S ribosomes in vitro. Probably functions indirectly by altering the affinity of the ribosome for aminoacyl-tRNA, thus increasing their reactivity as acceptors for peptidyl transferase. In Clostridium perfringens (strain ATCC 13124 / DSM 756 / JCM 1290 / NCIMB 6125 / NCTC 8237 / Type A), this protein is Elongation factor P.